The following is a 376-amino-acid chain: Queuine tRNA-ribosyltransferase (376 aa).

Aspartate 89 acts as the Proton acceptor in catalysis. Substrate contacts are provided by residues 89–93 (DSGGF), aspartate 143, glutamine 194, and glycine 221. Residues 252–258 (GVGIPSN) are RNA binding. Aspartate 271 (nucleophile) is an active-site residue. Positions 276-280 (ARNGR) are RNA binding; important for wobble base 34 recognition. The Zn(2+) site is built by cysteine 309, cysteine 311, cysteine 314, and histidine 340.

It belongs to the queuine tRNA-ribosyltransferase family. In terms of assembly, homodimer. Within each dimer, one monomer is responsible for RNA recognition and catalysis, while the other monomer binds to the replacement base PreQ1. Requires Zn(2+) as cofactor.

The enzyme catalyses 7-aminomethyl-7-carbaguanine + guanosine(34) in tRNA = 7-aminomethyl-7-carbaguanosine(34) in tRNA + guanine. The protein operates within tRNA modification; tRNA-queuosine biosynthesis. Functionally, catalyzes the base-exchange of a guanine (G) residue with the queuine precursor 7-aminomethyl-7-deazaguanine (PreQ1) at position 34 (anticodon wobble position) in tRNAs with GU(N) anticodons (tRNA-Asp, -Asn, -His and -Tyr). Catalysis occurs through a double-displacement mechanism. The nucleophile active site attacks the C1' of nucleotide 34 to detach the guanine base from the RNA, forming a covalent enzyme-RNA intermediate. The proton acceptor active site deprotonates the incoming PreQ1, allowing a nucleophilic attack on the C1' of the ribose to form the product. After dissociation, two additional enzymatic reactions on the tRNA convert PreQ1 to queuine (Q), resulting in the hypermodified nucleoside queuosine (7-(((4,5-cis-dihydroxy-2-cyclopenten-1-yl)amino)methyl)-7-deazaguanosine). The polypeptide is Queuine tRNA-ribosyltransferase (Clostridium botulinum (strain Kyoto / Type A2)).